The chain runs to 329 residues: Ribosomal RNA small subunit methyltransferase H (329 aa).

S-adenosyl-L-methionine is bound by residues 39-41, Asp-56, Phe-85, Asp-106, and Gln-113; that span reads GGY. Residues 289–308 are disordered; that stretch reads SGAIRPTPEEEARNPRARSA.

The protein belongs to the methyltransferase superfamily. RsmH family.

The protein localises to the cytoplasm. It catalyses the reaction cytidine(1402) in 16S rRNA + S-adenosyl-L-methionine = N(4)-methylcytidine(1402) in 16S rRNA + S-adenosyl-L-homocysteine + H(+). In terms of biological role, specifically methylates the N4 position of cytidine in position 1402 (C1402) of 16S rRNA. The polypeptide is Ribosomal RNA small subunit methyltransferase H (Novosphingobium aromaticivorans (strain ATCC 700278 / DSM 12444 / CCUG 56034 / CIP 105152 / NBRC 16084 / F199)).